The following is a 151-amino-acid chain: Small ribosomal subunit protein uS13 (151 aa).

Residues 131 to 151 (RGQRTKSSFRRGRTVGVKKKQ) form a disordered region. Positions 133 to 151 (QRTKSSFRRGRTVGVKKKQ) are enriched in basic residues.

The protein belongs to the universal ribosomal protein uS13 family. In terms of assembly, part of the 30S ribosomal subunit. Forms a loose heterodimer with protein S19. Forms two bridges to the 50S subunit in the 70S ribosome.

Located at the top of the head of the 30S subunit, it contacts several helices of the 16S rRNA. In the 70S ribosome it contacts the 23S rRNA (bridge B1a) and protein L5 of the 50S subunit (bridge B1b), connecting the 2 subunits; these bridges are implicated in subunit movement. The sequence is that of Small ribosomal subunit protein uS13 from Methanopyrus kandleri (strain AV19 / DSM 6324 / JCM 9639 / NBRC 100938).